We begin with the raw amino-acid sequence, 200 residues long: Large ribosomal subunit protein uL4 (200 aa).

Residues 38–73 are disordered; the sequence is GRQGTKGQKSRSDVSGGGKRPWRQKGTGRARAGTTR.

It belongs to the universal ribosomal protein uL4 family. As to quaternary structure, part of the 50S ribosomal subunit.

Functionally, one of the primary rRNA binding proteins, this protein initially binds near the 5'-end of the 23S rRNA. It is important during the early stages of 50S assembly. It makes multiple contacts with different domains of the 23S rRNA in the assembled 50S subunit and ribosome. Forms part of the polypeptide exit tunnel. The sequence is that of Large ribosomal subunit protein uL4 from Ectopseudomonas mendocina (strain ymp) (Pseudomonas mendocina).